The chain runs to 581 residues: Protein alan shepard (581 aa).

A compositionally biased stretch (pro residues) spans 1–10; sequence MHPRYSPAPP. A disordered region spans residues 1–73; that stretch reads MHPRYSPAPP…AVTAAPPTPR (73 aa). A Phosphotyrosine modification is found at Tyr-5. Residues 35 to 54 show a composition bias toward polar residues; the sequence is ANNSQQLPPQMPRSQNYANG. A compositionally biased stretch (low complexity) spans 55–68; sequence SSSSAAAASAVTAA. Phosphotyrosine occurs at positions 128 and 146. The span at 168 to 226 shows a compositional bias: low complexity; sequence PATTTYGQRVPTAASPSNTNSSSSSNTGSQSGTLSTSLSHTTNTNTNMGPNGTAQNQNQ. The interval 168–234 is disordered; the sequence is PATTTYGQRV…NQQGGGGEQL (67 aa). RRM domains are found at residues 237–310 and 316–395; these read TNLY…MAKQ and TNLY…FADG. Positions 555–581 are disordered; sequence MTDSEQASTAASPDEAYTQYPHQAAPK.

Its function is as follows. Has a role in the perception of gravity. The chain is Protein alan shepard from Drosophila willistoni (Fruit fly).